A 321-amino-acid chain; its full sequence is Low affinity immunoglobulin epsilon Fc receptor (321 aa).

At 1-21 (MEEGQYSEIEELPRRRCCRRG) the chain is on the cytoplasmic side. S-palmitoyl cysteine attachment occurs at residues Cys17 and Cys18. Residues 22 to 47 (TQIVLLGLVTAALWAGLLTLLLLWHW) traverse the membrane as a helical; Signal-anchor for type II membrane protein segment. Residues 48-321 (DTTQSLKQLE…LPTPSAPLHS (274 aa)) are Extracellular-facing. Asn63 carries an N-linked (GlcNAc...) asparagine glycan. Residues 66 to 85 (QVSKNLESHHGDQMAQKSQS) form a disordered region. Repeats lie at residues 69 to 89 (KNLE…TQIS), 90 to 110 (QELE…LELS), and 111 to 131 (WNLN…LNER). Cystine bridges form between Cys160/Cys288, Cys163/Cys174, Cys191/Cys282, and Cys259/Cys273. One can recognise a C-type lectin domain in the interval 162–284 (TCPEKWINFQ…RKLGAWVCDR (123 aa)). Ca(2+)-binding residues include Glu249, Thr251, Asn269, and Asp270. Positions 290–321 (PPASEGSAESMGPDSRPDPDGRLPTPSAPLHS) are disordered. Residue Ser296 is glycosylated (O-linked (Xyl...) (chondroitin sulfate) serine).

In terms of assembly, homotrimer. Interacts (via C-type lectin domain) with IGHE (via CH3 region); this interaction regulates IgE homeostasis. Interacts (via the C-terminus) with CR2/CD21 (via Sushi domain 1 and 2). N- and O-glycosylated. In terms of processing, the secreted form sCD23 is produced by ADAM10-mediated ectodomain shedding. In terms of tissue distribution, detected in urine (at protein level).

The protein resides in the cell membrane. It is found in the secreted. Low-affinity receptor for immunoglobulin E (IgE) and CR2/CD21. Has essential roles in the regulation of IgE production and in the differentiation of B cells. On B cells, initiates IgE-dependent antigen uptake and presentation to T cells. On macrophages, upon IgE binding and antigen cross-linking induces intracellular killing of parasites through activation of L-Arginine-nitric oxide pathway. The chain is Low affinity immunoglobulin epsilon Fc receptor (FCER2) from Homo sapiens (Human).